A 201-amino-acid polypeptide reads, in one-letter code: Guanylate kinase (201 aa).

Residues 7-186 enclose the Guanylate kinase-like domain; that stretch reads GVLLVLSSPS…SVEEISSILN (180 aa). Position 14–21 (14–21) interacts with ATP; sequence SPSGAGKT.

The protein belongs to the guanylate kinase family.

Its subcellular location is the cytoplasm. The enzyme catalyses GMP + ATP = GDP + ADP. Its function is as follows. Essential for recycling GMP and indirectly, cGMP. This is Guanylate kinase from Wolbachia pipientis wMel.